Here is a 341-residue protein sequence, read N- to C-terminus: Glycerol-3-phosphate dehydrogenase [NAD(P)+] (341 aa).

Residues serine 14, phenylalanine 15, arginine 35, and lysine 108 each coordinate NADPH. Sn-glycerol 3-phosphate is bound by residues lysine 108 and glycine 136. Alanine 140 contacts NADPH. Positions 191, 244, 254, 255, and 256 each coordinate sn-glycerol 3-phosphate. Lysine 191 (proton acceptor) is an active-site residue. Arginine 255 lines the NADPH pocket. Residues valine 279 and glutamate 281 each contribute to the NADPH site.

This sequence belongs to the NAD-dependent glycerol-3-phosphate dehydrogenase family.

The protein localises to the cytoplasm. The catalysed reaction is sn-glycerol 3-phosphate + NAD(+) = dihydroxyacetone phosphate + NADH + H(+). It carries out the reaction sn-glycerol 3-phosphate + NADP(+) = dihydroxyacetone phosphate + NADPH + H(+). It functions in the pathway membrane lipid metabolism; glycerophospholipid metabolism. Functionally, catalyzes the reduction of the glycolytic intermediate dihydroxyacetone phosphate (DHAP) to sn-glycerol 3-phosphate (G3P), the key precursor for phospholipid synthesis. The polypeptide is Glycerol-3-phosphate dehydrogenase [NAD(P)+] (Pseudomonas putida (strain ATCC 700007 / DSM 6899 / JCM 31910 / BCRC 17059 / LMG 24140 / F1)).